A 467-amino-acid polypeptide reads, in one-letter code: Dynactin subunit 4 (467 aa).

An N-acetylalanine modification is found at Ala-2. Residue Lys-222 forms a Glycyl lysine isopeptide (Lys-Gly) (interchain with G-Cter in SUMO2) linkage. Thr-414 is modified (phosphothreonine).

This sequence belongs to the dynactin subunit 4 family. In terms of assembly, subunit of dynactin, a multiprotein complex part of a tripartite complex with dynein and a adapter, such as BICDL1, BICD2 or HOOK3. The dynactin complex is built around ACTR1A/ACTB filament and consists of an actin-related filament composed of a shoulder domain, a pointed end and a barbed end. Its length is defined by its flexible shoulder domain. The soulder is composed of 2 DCTN1 subunits, 4 DCTN2 and 2 DCTN3. The 4 DCNT2 (via N-terminus) bind the ACTR1A filament and act as molecular rulers to determine the length. The pointed end is important for binding dynein-dynactin cargo adapters. Consists of 4 subunits: ACTR10, DCNT4, DCTN5 and DCTN6. The barbed end is composed of a CAPZA1:CAPZB heterodimers, which binds ACTR1A/ACTB filament and dynactin and stabilizes dynactin. Interacts with ATP7B, but not ATP7A, in a copper-dependent manner. Interacts with ANK2; this interaction is required for localization at costameres. Interacts with N4BP2L1.

Its subcellular location is the cytoplasm. It is found in the cytoskeleton. The protein resides in the microtubule organizing center. The protein localises to the centrosome. It localises to the stress fiber. Its subcellular location is the cell cortex. It is found in the myofibril. The protein resides in the sarcomere. Part of the dynactin complex that activates the molecular motor dynein for ultra-processive transport along microtubules. Together with dynein is involved in spindle assembly and cytokinesis. The protein is Dynactin subunit 4 (DCTN4) of Sus scrofa (Pig).